A 361-amino-acid chain; its full sequence is Velvet complex subunit B (361 aa).

Disordered stretches follow at residues Met1–Ser44 and Ser139–Gln161. A compositionally biased stretch (pro residues) spans Pro10–Ser26. The Velvet domain maps to Val54 to Arg340.

This sequence belongs to the velvet family. VelB subfamily. As to quaternary structure, component of the heterotrimeric velvet complex composed of laeA, veA and velB; VeA acting as a bridging protein between laeA and velB. Forms a heterodimeric complex with vosA; the formation of the velB-vosA complex is light-dependent.

It localises to the nucleus. The protein resides in the cytoplasm. Component of the velvet transcription factor complex that controls sexual/asexual developmental ratio in response to light, promoting sexual development in the darkness while stimulating asexual sporulation under illumination. The velvet complex acts as a global regulator for secondary metabolite gene expression. Component of the velB-VosA heterodimeric complex that plays a dual role in activating genes associated with spore maturation and repressing certain development-associated genes. The velB-VosA complex binds DNA through the DNA-binding domain of vosA that recognizes an 11-nucleotide consensus sequence 5'-CTGGCCGCGGC-3' consisting of two motifs in the promoters of key developmental regulatory genes. Controls the expression of the aflatoxin gene cluster. Likely coordinates with fluG to modulate sclerotial production. The sequence is that of Velvet complex subunit B from Aspergillus flavus (strain ATCC 200026 / FGSC A1120 / IAM 13836 / NRRL 3357 / JCM 12722 / SRRC 167).